Reading from the N-terminus, the 496-residue chain is Guanosine-5'-triphosphate,3'-diphosphate pyrophosphatase (496 aa).

The protein belongs to the GppA/Ppx family. GppA subfamily.

It catalyses the reaction guanosine 3'-diphosphate 5'-triphosphate + H2O = guanosine 3',5'-bis(diphosphate) + phosphate + H(+). It participates in purine metabolism; ppGpp biosynthesis; ppGpp from GTP: step 2/2. In terms of biological role, catalyzes the conversion of pppGpp to ppGpp. Guanosine pentaphosphate (pppGpp) is a cytoplasmic signaling molecule which together with ppGpp controls the 'stringent response', an adaptive process that allows bacteria to respond to amino acid starvation, resulting in the coordinated regulation of numerous cellular activities. In Aeromonas salmonicida (strain A449), this protein is Guanosine-5'-triphosphate,3'-diphosphate pyrophosphatase.